Consider the following 238-residue polypeptide: Purine nucleoside phosphorylase DeoD-type (238 aa).

Histidine 4 is a binding site for a purine D-ribonucleoside. Residues glycine 20, arginine 24, arginine 43, and 87–90 (RVGS) each bind phosphate. Residues 179–181 (EME) and 203–204 (SD) contribute to the a purine D-ribonucleoside site. Aspartate 204 acts as the Proton donor in catalysis.

This sequence belongs to the PNP/UDP phosphorylase family. Homohexamer; trimer of homodimers.

The catalysed reaction is a purine D-ribonucleoside + phosphate = a purine nucleobase + alpha-D-ribose 1-phosphate. It carries out the reaction a purine 2'-deoxy-D-ribonucleoside + phosphate = a purine nucleobase + 2-deoxy-alpha-D-ribose 1-phosphate. Its function is as follows. Catalyzes the reversible phosphorolytic breakdown of the N-glycosidic bond in the beta-(deoxy)ribonucleoside molecules, with the formation of the corresponding free purine bases and pentose-1-phosphate. The polypeptide is Purine nucleoside phosphorylase DeoD-type (Haemophilus influenzae (strain PittGG)).